Consider the following 309-residue polypeptide: Carbamate kinase (309 aa).

Belongs to the carbamate kinase family.

The protein localises to the cytoplasm. It carries out the reaction hydrogencarbonate + NH4(+) + ATP = carbamoyl phosphate + ADP + H2O + H(+). Its pathway is metabolic intermediate metabolism; carbamoyl phosphate degradation; CO(2) and NH(3) from carbamoyl phosphate: step 1/1. This chain is Carbamate kinase (arcC), found in Staphylococcus haemolyticus (strain JCSC1435).